The sequence spans 485 residues: MTITPQHLIALLPLLIVGLTVVVVMLSIAWRRNHFLNATLSVIGLNAALVSLWFVGQAGAMDVTPLMRVDGFAMLYTGLVLLASLATCTFAYPWLEGYNDNQEEFYLLVLIASLGGILLANANHLAALFLGIELISLPLFGLIGYAFRQKRSLEASIKYTILSAAASSFLLFGMALVYAQSGNLSFEALGKSLGDGMLHEPLLLAGFGLMIVGLGFKLSLVPFHLWTPDVYQGAPAPVSTFLATASKIAIFGVVMRLFLYAPVGDSEAVRVVLGIIAFASIIFGNLMALSQTNIKRLLGYSSISHLGYLLVALIALQSGEMSMEAVGVYLAGYLFSSLGAFGVVSLMSSPFRGPDADSLYSYRGLFWHRPVLAAVMTVMMLSLAGIPMTLGFIGKFYVLAVGVQASLWWLVAAVVVGSAIGLYYYLRVAVSLYLHAPQQPGRDAPTNWQYSAGGIVVLISALLVLVLGVWPQPLISLVQLATPLM.

14 helical membrane passes run 8 to 28 (LIAL…MLSI), 35 to 55 (FLNA…LWFV), 71 to 91 (GFAM…CTFA), 105 to 125 (FYLL…ANHL), 127 to 147 (ALFL…GYAF), 159 to 179 (YTIL…LVYA), 203 to 223 (LLAG…LVPF), 235 to 255 (PAPV…GVVM), 271 to 291 (VVLG…ALSQ), 297 to 317 (LLGY…IALQ), 326 to 346 (VGVY…VVSL), 373 to 393 (AAVM…LGFI), 408 to 430 (WWLV…RVAV), and 455 to 475 (IVVL…QPLI).

Belongs to the complex I subunit 2 family. In terms of assembly, NDH-1 is composed of 13 different subunits. Subunits NuoA, H, J, K, L, M, N constitute the membrane sector of the complex.

The protein resides in the cell inner membrane. The enzyme catalyses a quinone + NADH + 5 H(+)(in) = a quinol + NAD(+) + 4 H(+)(out). In terms of biological role, NDH-1 shuttles electrons from NADH, via FMN and iron-sulfur (Fe-S) centers, to quinones in the respiratory chain. The immediate electron acceptor for the enzyme in this species is believed to be ubiquinone. Couples the redox reaction to proton translocation (for every two electrons transferred, four hydrogen ions are translocated across the cytoplasmic membrane), and thus conserves the redox energy in a proton gradient. In Salmonella schwarzengrund (strain CVM19633), this protein is NADH-quinone oxidoreductase subunit N.